Here is a 109-residue protein sequence, read N- to C-terminus: uncharacterized protein (109 aa).

The interval 77–98 (TRTGHAYPRFTRPSFPSCNRNG) is disordered.

This is an uncharacterized protein from Homo sapiens (Human).